The primary structure comprises 263 residues: MSLDERIITQAILETYFEKFKSSLDLDVAIVGGGPSGMTAARLLAADGFNVALFERKLSLGGGMWGGGMTFNMIVVQEESVHLLTDVGVPVKRYKDNYFTADAVAATTTLASAACLAGAKIFNCMSVEDVMLREENGVKRVTGIVINSSPVEIAGLHVDPVVLGSKYLVEATGHAVEVLQTLVRKNDVRLNTPSGGIEGEQSMWADTAEINTVKNTREIFPGLYVAGMAANASYGSYRMGPIFGGMLLSGEKVAADIAAKLKG.

NAD(+)-binding positions include S36, 55 to 56 (ER), G63, V127, and 157 to 159 (HVD). 2 residues coordinate Fe cation: D159 and H174. M228 is a binding site for NAD(+). Residue R238 coordinates glycine.

Belongs to the THI4 family. As to quaternary structure, homooctamer; tetramer of dimers. Fe(2+) serves as cofactor.

It carries out the reaction hydrogen sulfide + glycine + NAD(+) = ADP-5-ethyl-4-methylthiazole-2-carboxylate + nicotinamide + 3 H2O + H(+). Its pathway is cofactor biosynthesis; thiamine diphosphate biosynthesis. Involved in the biosynthesis of the thiazole moiety of thiamine. Catalyzes the conversion of NAD and glycine to adenosine diphosphate 5-(2-hydroxyethyl)-4-methylthiazole-2-carboxylate (ADT), an adenylated thiazole intermediate, using free sulfide as a source of sulfur. This is Thiamine thiazole synthase from Solidesulfovibrio magneticus (strain ATCC 700980 / DSM 13731 / RS-1) (Desulfovibrio magneticus).